A 427-amino-acid polypeptide reads, in one-letter code: Inward rectifier potassium channel 2 (427 aa).

The Cytoplasmic portion of the chain corresponds to 1 to 81 (MGSVRTNRYS…IFTTCVDIRW (81 aa)). Cys-76 carries the S-nitrosocysteine modification. A helical membrane pass occupies residues 82–106 (RWMLVIFCLAFVLSWLFFGCVFWLI). The Extracellular portion of the chain corresponds to 107–128 (ALLHGDLDASRESKACVSEVNS). The segment at residues 129–140 (FTAAFLFSIETQ) is an intramembrane region (helical; Pore-forming). Residues 141 to 147 (TTIGYGF) constitute an intramembrane region (pore-forming). The Selectivity filter signature appears at 142 to 147 (TIGYGF). Residues 148–156 (RCVTDECPV) lie on the Extracellular side of the membrane. A helical transmembrane segment spans residues 157–178 (AVFMVVFQSIVGCIIDAFIIGA). At 179–427 (VMAKMAKPKK…PRPLRRESEI (249 aa)) the chain is on the cytoplasmic side. The polyphosphoinositide (PIP2)-binding stretch occupies residues 181–208 (AKMAKPKKRNETLVFSHNAVIAMRDGKL). The tract at residues 384–427 (SKEEDDSENGVPESTSTDTPPDIDLHNQASVPLEPRPLRRESEI) is disordered. The short motif at 425–427 (SEI) is the PDZ-binding element.

The protein belongs to the inward rectifier-type potassium channel (TC 1.A.2.1) family. KCNJ2 subfamily. In terms of assembly, homotetramer. Homomultimeric and heteromultimeric association with KCNJ4/Kir2.3. Can form heteromeric channels with Kir2.6/KCNJ18. Associates, via its PDZ-recognition domain, with a complex containing LIN7A, LIN7B, LIN7C, DLG1, CASK and APBA1. In terms of processing, S-nitrosylation increases the open probability and inward rectifying currents. In terms of tissue distribution, highly expressed in the ventricle and skeletal muscle, moderately in cerebrum and cerebellum. Only low levels are detected in kidney or lung.

Its subcellular location is the cell membrane. The protein localises to the sarcolemma. The protein resides in the T-tubule. The catalysed reaction is K(+)(in) = K(+)(out). Its activity is regulated as follows. Activated by phosphatidylinositol 4,5 biphosphate (PtdIns(4,5)P2). Its function is as follows. Inward rectifier potassium channels are characterized by a greater tendency to allow potassium to flow into the cell rather than out of it. Their voltage dependence is regulated by the concentration of extracellular potassium; as external potassium is raised, the voltage range of the channel opening shifts to more positive voltages. The inward rectification is mainly due to the blockage of outward current by internal magnesium. Can be blocked by extracellular barium and cesium. Probably participates in establishing action potential waveform and excitability of neuronal and muscle tissues. This chain is Inward rectifier potassium channel 2 (KCNJ2), found in Oryctolagus cuniculus (Rabbit).